Reading from the N-terminus, the 517-residue chain is Protein NETWORKED 4B (517 aa).

Disordered regions lie at residues M1–N29 and L101–D159. Residues K10–H21 show a composition bias toward basic residues. Residues H21 to L101 enclose the NAB domain. The span at S107–S119 shows a compositional bias: low complexity. A compositionally biased stretch (basic and acidic residues) spans T121 to E135. Positions E156–L486 form a coiled coil.

This sequence belongs to the NET family.

Plant-specific actin binding protein. May be part of a membrane-cytoskeletal adapter complex. The protein is Protein NETWORKED 4B of Arabidopsis thaliana (Mouse-ear cress).